A 427-amino-acid chain; its full sequence is 3-phosphoshikimate 1-carboxyvinyltransferase (427 aa).

Positions 21, 22, and 26 each coordinate 3-phosphoshikimate. Residue lysine 21 coordinates phosphoenolpyruvate. Glycine 93 and arginine 121 together coordinate phosphoenolpyruvate. Residues serine 166, glutamine 168, aspartate 314, and lysine 341 each contribute to the 3-phosphoshikimate site. Glutamine 168 contacts phosphoenolpyruvate. The active-site Proton acceptor is aspartate 314. Phosphoenolpyruvate is bound by residues arginine 345 and arginine 387.

This sequence belongs to the EPSP synthase family. In terms of assembly, monomer.

Its subcellular location is the cytoplasm. The enzyme catalyses 3-phosphoshikimate + phosphoenolpyruvate = 5-O-(1-carboxyvinyl)-3-phosphoshikimate + phosphate. It participates in metabolic intermediate biosynthesis; chorismate biosynthesis; chorismate from D-erythrose 4-phosphate and phosphoenolpyruvate: step 6/7. Its function is as follows. Catalyzes the transfer of the enolpyruvyl moiety of phosphoenolpyruvate (PEP) to the 5-hydroxyl of shikimate-3-phosphate (S3P) to produce enolpyruvyl shikimate-3-phosphate and inorganic phosphate. This chain is 3-phosphoshikimate 1-carboxyvinyltransferase, found in Alkaliphilus oremlandii (strain OhILAs) (Clostridium oremlandii (strain OhILAs)).